A 535-amino-acid chain; its full sequence is F-box protein At1g56610 (535 aa).

The next 3 membrane-spanning stretches (helical) occupy residues 3-23 (FALV…SSSI), 37-57 (VLLL…LCLF), and 82-102 (LAPH…SLLF). One can recognise an F-box; degenerate domain in the interval 73 to 119 (TELCDLPKCLAPHILSWLPTKTAVTVSLLFMKGWWRSEMKNLSSLKF).

Part of a SCF (ASK-cullin-F-box) protein ligase complex. Interacts with ASK4.

The protein resides in the membrane. Its pathway is protein modification; protein ubiquitination. Component of SCF(ASK-cullin-F-box) E3 ubiquitin ligase complexes, which may mediate the ubiquitination and subsequent proteasomal degradation of target proteins. The protein is F-box protein At1g56610 of Arabidopsis thaliana (Mouse-ear cress).